The primary structure comprises 404 residues: Acetylornithine/succinyldiaminopimelate aminotransferase (404 aa).

Residues 108–109 (GA) and Phe141 contribute to the pyridoxal 5'-phosphate site. Arg144 contributes to the N(2)-acetyl-L-ornithine binding site. 226-229 (DEIQ) contributes to the pyridoxal 5'-phosphate binding site. Lys255 is modified (N6-(pyridoxal phosphate)lysine). Thr283 lines the N(2)-acetyl-L-ornithine pocket. Residue Thr284 coordinates pyridoxal 5'-phosphate.

This sequence belongs to the class-III pyridoxal-phosphate-dependent aminotransferase family. ArgD subfamily. In terms of assembly, homodimer. Pyridoxal 5'-phosphate serves as cofactor.

Its subcellular location is the cytoplasm. It carries out the reaction N(2)-acetyl-L-ornithine + 2-oxoglutarate = N-acetyl-L-glutamate 5-semialdehyde + L-glutamate. The enzyme catalyses N-succinyl-(2S,6S)-2,6-diaminopimelate + 2-oxoglutarate = (S)-2-succinylamino-6-oxoheptanedioate + L-glutamate. Its pathway is amino-acid biosynthesis; L-arginine biosynthesis; N(2)-acetyl-L-ornithine from L-glutamate: step 4/4. The protein operates within amino-acid biosynthesis; L-lysine biosynthesis via DAP pathway; LL-2,6-diaminopimelate from (S)-tetrahydrodipicolinate (succinylase route): step 2/3. Functionally, involved in both the arginine and lysine biosynthetic pathways. The chain is Acetylornithine/succinyldiaminopimelate aminotransferase from Buchnera aphidicola subsp. Schizaphis graminum (strain Sg).